Reading from the N-terminus, the 460-residue chain is MTPDEVRRTRATVVGGARSGRAAARLLAKVGGEVFLTEQDAPSDGAAAALDEAGVEYEFGGHTAEALDADVLVLSPGVPTQSNIVQQALRAGLDVYSEIEAASWFCDAPIVAITGTNGKTTTTSLTGHVFRTAFADTLGREAIVAGNIGYPFSDYVLETEPTDVVVLEVSSFQLDHVETFRPRVSVLLNITPDHLGRYDHDFEAYAQAKHNIFRNQGEGDVVVYNRDDDDVRNAAEEAAAEQGVRPMAITREGVPAAGAGFRDGRIVLRTDDEDDSLMPQDELALRGRHNMYNSLAAAVSARVMEVENDVIRESLSGFEGVPHRLEEVHTVDDVLYVNDSKATNVNAVWYALESFDRPIVLIAGGRDKGNDYTDLKPLVRDQVRAVVALGESAEKVERELGGEAPDHSRAETMEDALTQAQRAAQPGDVVLLSPACSSFDMYENYEERGDTFRRLVETLL.

115-121 (GTNGKTT) provides a ligand contact to ATP.

Belongs to the MurCDEF family.

The protein resides in the cytoplasm. It catalyses the reaction UDP-N-acetyl-alpha-D-muramoyl-L-alanine + D-glutamate + ATP = UDP-N-acetyl-alpha-D-muramoyl-L-alanyl-D-glutamate + ADP + phosphate + H(+). It functions in the pathway cell wall biogenesis; peptidoglycan biosynthesis. Its function is as follows. Cell wall formation. Catalyzes the addition of glutamate to the nucleotide precursor UDP-N-acetylmuramoyl-L-alanine (UMA). This Salinibacter ruber (strain DSM 13855 / M31) protein is UDP-N-acetylmuramoylalanine--D-glutamate ligase.